The primary structure comprises 479 residues: Xylose isomerase (479 aa).

Residue His144 is part of the active site. 7 residues coordinate Mn(2+): Glu275, Glu311, His314, Asp339, Asp350, Asp352, and Tyr382.

Belongs to the xylose isomerase family. In terms of assembly, homodimer. Mn(2+) is required as a cofactor.

The catalysed reaction is alpha-D-xylose = alpha-D-xylulofuranose. The sequence is that of Xylose isomerase (XYLA) from Hordeum vulgare (Barley).